The following is a 389-amino-acid chain: Protein P4 (389 aa).

This Rice tungro bacilliform virus (isolate Philippines) (RTBV) protein is Protein P4.